Here is a 446-residue protein sequence, read N- to C-terminus: WEB family protein At3g56270 (446 aa).

Residues 313–349 are a coiled coil; it reads TNVSRIEILRKLEEANEEVKQSKQALEVALNRVEIAS.

Belongs to the WEB family.

This is WEB family protein At3g56270 from Arabidopsis thaliana (Mouse-ear cress).